Consider the following 156-residue polypeptide: Small ribosomal subunit protein uS7 (156 aa).

It belongs to the universal ribosomal protein uS7 family. Part of the 30S ribosomal subunit. Contacts proteins S9 and S11.

In terms of biological role, one of the primary rRNA binding proteins, it binds directly to 16S rRNA where it nucleates assembly of the head domain of the 30S subunit. Is located at the subunit interface close to the decoding center, probably blocks exit of the E-site tRNA. This Lachnospira eligens (strain ATCC 27750 / DSM 3376 / VPI C15-48 / C15-B4) (Eubacterium eligens) protein is Small ribosomal subunit protein uS7.